The following is a 556-amino-acid chain: Zinc finger protein 18 (556 aa).

Positions 41–123 constitute an SCAN box domain; sequence RQLFRQFRYQ…TLVESLKGDP (83 aa). The tract at residues 169–195 is disordered; it reads QDLPLQNTSSAPGELLSHGVKEESDLE. One can recognise a KRAB domain in the interval 218 to 291; that stretch reads EVGTALLPSL…HLHSAEKMAR (74 aa). 5 C2H2-type zinc fingers span residues 415–437, 443–465, 471–493, 499–521, and 527–549; these read PTCR…QRTH, FHCR…QRTH, CKCD…EKIH, YKCP…QRVH, and YKCT…QRSH.

The protein belongs to the krueppel C2H2-type zinc-finger protein family.

It localises to the nucleus. Functionally, may be involved in transcriptional regulation. The polypeptide is Zinc finger protein 18 (Znf18) (Rattus norvegicus (Rat)).